The sequence spans 212 residues: LexA repressor (212 aa).

Positions valine 26–aspartate 46 form a DNA-binding region, H-T-H motif. Residues serine 128 and lysine 171 each act as for autocatalytic cleavage activity in the active site.

It belongs to the peptidase S24 family. Homodimer.

It catalyses the reaction Hydrolysis of Ala-|-Gly bond in repressor LexA.. In terms of biological role, represses a number of genes involved in the response to DNA damage (SOS response), including recA and lexA. In the presence of single-stranded DNA, RecA interacts with LexA causing an autocatalytic cleavage which disrupts the DNA-binding part of LexA, leading to derepression of the SOS regulon and eventually DNA repair. The sequence is that of LexA repressor from Oenococcus oeni (strain ATCC BAA-331 / PSU-1).